Here is an 86-residue protein sequence, read N- to C-terminus: RNA-binding protein Hfq (86 aa).

The Sm domain occupies 9 to 68 (DPYLNTLRKEKVGVSIYLVNGIKLQGTIESFDQFVILLKNTVSQMVYKHAISTVVPVRPI).

It belongs to the Hfq family. In terms of assembly, homohexamer.

RNA chaperone that binds small regulatory RNA (sRNAs) and mRNAs to facilitate mRNA translational regulation in response to envelope stress, environmental stress and changes in metabolite concentrations. Also binds with high specificity to tRNAs. This chain is RNA-binding protein Hfq, found in Pseudomonas savastanoi pv. phaseolicola (strain 1448A / Race 6) (Pseudomonas syringae pv. phaseolicola (strain 1448A / Race 6)).